Here is a 642-residue protein sequence, read N- to C-terminus: tRNA uridine 5-carboxymethylaminomethyl modification enzyme MnmG (642 aa).

24–29 is a binding site for FAD; that stretch reads GGGHAG. 284 to 298 contributes to the NAD(+) binding site; sequence GPRYCPSIEDKIHRF.

This sequence belongs to the MnmG family. Homodimer. Heterotetramer of two MnmE and two MnmG subunits. The cofactor is FAD.

The protein localises to the cytoplasm. Functionally, NAD-binding protein involved in the addition of a carboxymethylaminomethyl (cmnm) group at the wobble position (U34) of certain tRNAs, forming tRNA-cmnm(5)s(2)U34. This Psychrobacter sp. (strain PRwf-1) protein is tRNA uridine 5-carboxymethylaminomethyl modification enzyme MnmG.